Reading from the N-terminus, the 277-residue chain is Large ribosomal subunit protein uL2 (277 aa).

Disordered stretches follow at residues 36 to 55 (PLPK…RHHG) and 213 to 277 (WKGI…RKKK).

This sequence belongs to the universal ribosomal protein uL2 family. As to quaternary structure, part of the 50S ribosomal subunit. Forms a bridge to the 30S subunit in the 70S ribosome.

In terms of biological role, one of the primary rRNA binding proteins. Required for association of the 30S and 50S subunits to form the 70S ribosome, for tRNA binding and peptide bond formation. It has been suggested to have peptidyltransferase activity; this is somewhat controversial. Makes several contacts with the 16S rRNA in the 70S ribosome. This is Large ribosomal subunit protein uL2 from Staphylococcus saprophyticus subsp. saprophyticus (strain ATCC 15305 / DSM 20229 / NCIMB 8711 / NCTC 7292 / S-41).